The following is a 343-amino-acid chain: Uroporphyrinogen decarboxylase (343 aa).

Substrate contacts are provided by residues 26–30 (RQAGR), Asp75, Tyr150, Ser205, and His319.

Belongs to the uroporphyrinogen decarboxylase family. As to quaternary structure, homodimer.

Its subcellular location is the cytoplasm. The enzyme catalyses uroporphyrinogen III + 4 H(+) = coproporphyrinogen III + 4 CO2. Its pathway is porphyrin-containing compound metabolism; protoporphyrin-IX biosynthesis; coproporphyrinogen-III from 5-aminolevulinate: step 4/4. Catalyzes the decarboxylation of four acetate groups of uroporphyrinogen-III to yield coproporphyrinogen-III. This is Uroporphyrinogen decarboxylase from Syntrophotalea carbinolica (strain DSM 2380 / NBRC 103641 / GraBd1) (Pelobacter carbinolicus).